Consider the following 447-residue polypeptide: Signal recognition particle 54 kDa protein (447 aa).

GTP contacts are provided by residues 108 to 115 (GLYGMGKT), 188 to 192 (DTAGR), and 246 to 249 (TKLD).

Belongs to the GTP-binding SRP family. SRP54 subfamily. As to quaternary structure, part of the signal recognition particle protein translocation system, which is composed of SRP and FtsY. Archaeal SRP consists of a 7S RNA molecule of 300 nucleotides and two protein subunits: SRP54 and SRP19.

The protein resides in the cytoplasm. The catalysed reaction is GTP + H2O = GDP + phosphate + H(+). Its function is as follows. Involved in targeting and insertion of nascent membrane proteins into the cytoplasmic membrane. Binds to the hydrophobic signal sequence of the ribosome-nascent chain (RNC) as it emerges from the ribosomes. The SRP-RNC complex is then targeted to the cytoplasmic membrane where it interacts with the SRP receptor FtsY. The chain is Signal recognition particle 54 kDa protein from Methanopyrus kandleri (strain AV19 / DSM 6324 / JCM 9639 / NBRC 100938).